The chain runs to 162 residues: NADH-quinone oxidoreductase subunit I (162 aa).

4Fe-4S ferredoxin-type domains follow at residues 53–83 (LRRY…IDSA) and 93–122 (TRYD…ETHI). Residues Cys-63, Cys-66, Cys-69, Cys-73, Cys-102, Cys-105, Cys-108, and Cys-112 each contribute to the [4Fe-4S] cluster site.

It belongs to the complex I 23 kDa subunit family. In terms of assembly, NDH-1 is composed of 14 different subunits. Subunits NuoA, H, J, K, L, M, N constitute the membrane sector of the complex. [4Fe-4S] cluster serves as cofactor.

The protein resides in the cell inner membrane. The enzyme catalyses a quinone + NADH + 5 H(+)(in) = a quinol + NAD(+) + 4 H(+)(out). Its function is as follows. NDH-1 shuttles electrons from NADH, via FMN and iron-sulfur (Fe-S) centers, to quinones in the respiratory chain. The immediate electron acceptor for the enzyme in this species is believed to be ubiquinone. Couples the redox reaction to proton translocation (for every two electrons transferred, four hydrogen ions are translocated across the cytoplasmic membrane), and thus conserves the redox energy in a proton gradient. This Xanthomonas oryzae pv. oryzae (strain MAFF 311018) protein is NADH-quinone oxidoreductase subunit I.